We begin with the raw amino-acid sequence, 471 residues long: Ribulose bisphosphate carboxylase large chain (471 aa).

The substrate site is built by N115 and T165. Residue K167 is the Proton acceptor of the active site. K169 contacts substrate. K193, D195, and E196 together coordinate Mg(2+). Residue K193 is modified to N6-carboxylysine. Residue H286 is the Proton acceptor of the active site. Residues R287, H319, and S371 each coordinate substrate.

This sequence belongs to the RuBisCO large chain family. Type I subfamily. As to quaternary structure, heterohexadecamer of 8 large chains and 8 small chains. The cofactor is Mg(2+).

It is found in the carboxysome. The catalysed reaction is 2 (2R)-3-phosphoglycerate + 2 H(+) = D-ribulose 1,5-bisphosphate + CO2 + H2O. It carries out the reaction D-ribulose 1,5-bisphosphate + O2 = 2-phosphoglycolate + (2R)-3-phosphoglycerate + 2 H(+). Its function is as follows. RuBisCO catalyzes two reactions: the carboxylation of D-ribulose 1,5-bisphosphate, the primary event in carbon dioxide fixation, as well as the oxidative fragmentation of the pentose substrate in the photorespiration process. Both reactions occur simultaneously and in competition at the same active site. The chain is Ribulose bisphosphate carboxylase large chain from Synechococcus sp. (strain CC9605).